Reading from the N-terminus, the 493-residue chain is Guanosine-5'-triphosphate,3'-diphosphate pyrophosphatase (493 aa).

This sequence belongs to the GppA/Ppx family. GppA subfamily.

The enzyme catalyses guanosine 3'-diphosphate 5'-triphosphate + H2O = guanosine 3',5'-bis(diphosphate) + phosphate + H(+). The protein operates within purine metabolism; ppGpp biosynthesis; ppGpp from GTP: step 2/2. Its function is as follows. Catalyzes the conversion of pppGpp to ppGpp. Guanosine pentaphosphate (pppGpp) is a cytoplasmic signaling molecule which together with ppGpp controls the 'stringent response', an adaptive process that allows bacteria to respond to amino acid starvation, resulting in the coordinated regulation of numerous cellular activities. The chain is Guanosine-5'-triphosphate,3'-diphosphate pyrophosphatase from Salmonella agona (strain SL483).